Consider the following 174-residue polypeptide: MTIILGIDPGSRVTGYGLIKESDRKIAYIDSGCIRTSNDVELSHKLLQIYDGICELMDHYSPTEVAIEQIFMHNNPNSALKLGHARGVAMVAAASHRAKICEYSAREIKQSVVGYGAAEKDQVSHMVVELLQLNRAPQKDAADALAIAICHSHMRNGLSKLIGSRGTKRRRMRL.

Residues D8, E68, and D140 contribute to the active site. Mg(2+) is bound by residues D8, E68, and D140.

It belongs to the RuvC family. In terms of assembly, homodimer which binds Holliday junction (HJ) DNA. The HJ becomes 2-fold symmetrical on binding to RuvC with unstacked arms; it has a different conformation from HJ DNA in complex with RuvA. In the full resolvosome a probable DNA-RuvA(4)-RuvB(12)-RuvC(2) complex forms which resolves the HJ. It depends on Mg(2+) as a cofactor.

The protein resides in the cytoplasm. It carries out the reaction Endonucleolytic cleavage at a junction such as a reciprocal single-stranded crossover between two homologous DNA duplexes (Holliday junction).. Its function is as follows. The RuvA-RuvB-RuvC complex processes Holliday junction (HJ) DNA during genetic recombination and DNA repair. Endonuclease that resolves HJ intermediates. Cleaves cruciform DNA by making single-stranded nicks across the HJ at symmetrical positions within the homologous arms, yielding a 5'-phosphate and a 3'-hydroxyl group; requires a central core of homology in the junction. The consensus cleavage sequence is 5'-(A/T)TT(C/G)-3'. Cleavage occurs on the 3'-side of the TT dinucleotide at the point of strand exchange. HJ branch migration catalyzed by RuvA-RuvB allows RuvC to scan DNA until it finds its consensus sequence, where it cleaves and resolves the cruciform DNA. In Legionella pneumophila (strain Paris), this protein is Crossover junction endodeoxyribonuclease RuvC.